A 277-amino-acid chain; its full sequence is Phosphatidylserine decarboxylase proenzyme (277 aa).

Residues D88, H144, and S242 each act as charge relay system; for autoendoproteolytic cleavage activity in the active site. S242 acts as the Schiff-base intermediate with substrate; via pyruvic acid; for decarboxylase activity in catalysis. A Pyruvic acid (Ser); by autocatalysis modification is found at S242.

It belongs to the phosphatidylserine decarboxylase family. PSD-B subfamily. Prokaryotic type I sub-subfamily. As to quaternary structure, heterodimer of a large membrane-associated beta subunit and a small pyruvoyl-containing alpha subunit. The cofactor is pyruvate. In terms of processing, is synthesized initially as an inactive proenzyme. Formation of the active enzyme involves a self-maturation process in which the active site pyruvoyl group is generated from an internal serine residue via an autocatalytic post-translational modification. Two non-identical subunits are generated from the proenzyme in this reaction, and the pyruvate is formed at the N-terminus of the alpha chain, which is derived from the carboxyl end of the proenzyme. The autoendoproteolytic cleavage occurs by a canonical serine protease mechanism, in which the side chain hydroxyl group of the serine supplies its oxygen atom to form the C-terminus of the beta chain, while the remainder of the serine residue undergoes an oxidative deamination to produce ammonia and the pyruvoyl prosthetic group on the alpha chain. During this reaction, the Ser that is part of the protease active site of the proenzyme becomes the pyruvoyl prosthetic group, which constitutes an essential element of the active site of the mature decarboxylase.

It localises to the cell membrane. The catalysed reaction is a 1,2-diacyl-sn-glycero-3-phospho-L-serine + H(+) = a 1,2-diacyl-sn-glycero-3-phosphoethanolamine + CO2. It participates in phospholipid metabolism; phosphatidylethanolamine biosynthesis; phosphatidylethanolamine from CDP-diacylglycerol: step 2/2. In terms of biological role, catalyzes the formation of phosphatidylethanolamine (PtdEtn) from phosphatidylserine (PtdSer). The polypeptide is Phosphatidylserine decarboxylase proenzyme (Psychrobacter cryohalolentis (strain ATCC BAA-1226 / DSM 17306 / VKM B-2378 / K5)).